Here is a 1795-residue protein sequence, read N- to C-terminus: Type III effector AvrE (1795 aa).

Over residues 1–18 (MQSPSIHRNTGSIIQPTV) the composition is skewed to polar residues. A disordered region spans residues 1–227 (MQSPSIHRNT…PPREPMLWRS (227 aa)). A compositionally biased stretch (low complexity) spans 60 to 75 (KSKAPQQKAATPPTAK). Composition is skewed to polar residues over residues 97-109 (GFSN…THSA) and 117-127 (HPNQASSSGAQ). The span at 129–154 (HEIHPEAAPRKNLRVRFDLPQDRLER) shows a compositional bias: basic and acidic residues. Residues 174-191 (ATRQFRSPDSHLQGSDGT) show a composition bias toward polar residues. The span at 203–215 (PSSSGSKIGDSDG) shows a compositional bias: low complexity. Short sequence motifs (wxxxE) lie at residues 393-397 (WKIPE) and 829-833 (WQRFE). The interval 1461-1488 (QIGGSHTAPTGTPASAPGPTPASQTAAN) is disordered. Residues 1467-1487 (TAPTGTPASAPGPTPASQTAA) show a composition bias toward low complexity. An ERMRS motif is present at residues 1787 to 1790 (KKEG).

Belongs to the AvrE family. As to quaternary structure, in planta interaction assays, interacts with the A.thaliana protein phosphatase 2A (PP2A) via direct interaction/association with specific B' regulatory subunits.

It is found in the secreted. It localises to the host cell. The protein resides in the host cell membrane. Its activity is regulated as follows. Polyamidoamine dendrimers inhibit channel and virulence activities. In terms of biological role, major virulence factor that may function as a water- and solute-permeable channel dedicated to creating osmotic/water potential perturbation and a water- and nutrient-rich apoplast in which bacteria multiply within the infected plant tissues. Expression in Xenopus oocytes results in inward and outward currents, permeability to water and osmolarity-dependent oocyte swelling and bursting. Its function is as follows. Elicits cell death in host tomato leaves and in non-host Nicotiana tabacum leaves. Acts within plant cells and promotes lesion formation. The combined action of AvrE and HopM1 is particularly important in promoting bacterial growth in plants. Contributes to the down-regulation of a specific subset of A.thaliana genes during infection, including NHL13, which is required for antibacterial immunity. The polypeptide is Type III effector AvrE (Pseudomonas syringae pv. tomato (strain ATCC BAA-871 / DC3000)).